We begin with the raw amino-acid sequence, 341 residues long: uncharacterized protein (341 aa).

The disordered stretch occupies residues 125–146 (DTVKHNGSGPRPEQASSHVHYS).

It belongs to the cycloisomerase 2 family.

This is an uncharacterized protein from Lactococcus lactis subsp. cremoris (strain MG1363).